The chain runs to 333 residues: 4-hydroxy-3-methylbut-2-enyl diphosphate reductase (333 aa).

Cysteine 34 contributes to the [4Fe-4S] cluster binding site. Residues histidine 63 and histidine 96 each contribute to the (2E)-4-hydroxy-3-methylbut-2-enyl diphosphate site. Dimethylallyl diphosphate contacts are provided by histidine 63 and histidine 96. Isopentenyl diphosphate is bound by residues histidine 63 and histidine 96. [4Fe-4S] cluster is bound at residue cysteine 118. Histidine 146 contributes to the (2E)-4-hydroxy-3-methylbut-2-enyl diphosphate binding site. Histidine 146 is a dimethylallyl diphosphate binding site. Histidine 146 provides a ligand contact to isopentenyl diphosphate. Residue glutamate 148 is the Proton donor of the active site. Threonine 186 provides a ligand contact to (2E)-4-hydroxy-3-methylbut-2-enyl diphosphate. Cysteine 216 lines the [4Fe-4S] cluster pocket. (2E)-4-hydroxy-3-methylbut-2-enyl diphosphate-binding residues include serine 244, serine 245, asparagine 246, and serine 289. Dimethylallyl diphosphate-binding residues include serine 244, serine 245, asparagine 246, and serine 289. Isopentenyl diphosphate-binding residues include serine 244, serine 245, asparagine 246, and serine 289.

This sequence belongs to the IspH family. Requires [4Fe-4S] cluster as cofactor.

The catalysed reaction is isopentenyl diphosphate + 2 oxidized [2Fe-2S]-[ferredoxin] + H2O = (2E)-4-hydroxy-3-methylbut-2-enyl diphosphate + 2 reduced [2Fe-2S]-[ferredoxin] + 2 H(+). The enzyme catalyses dimethylallyl diphosphate + 2 oxidized [2Fe-2S]-[ferredoxin] + H2O = (2E)-4-hydroxy-3-methylbut-2-enyl diphosphate + 2 reduced [2Fe-2S]-[ferredoxin] + 2 H(+). Its pathway is isoprenoid biosynthesis; dimethylallyl diphosphate biosynthesis; dimethylallyl diphosphate from (2E)-4-hydroxy-3-methylbutenyl diphosphate: step 1/1. It functions in the pathway isoprenoid biosynthesis; isopentenyl diphosphate biosynthesis via DXP pathway; isopentenyl diphosphate from 1-deoxy-D-xylulose 5-phosphate: step 6/6. Functionally, catalyzes the conversion of 1-hydroxy-2-methyl-2-(E)-butenyl 4-diphosphate (HMBPP) into a mixture of isopentenyl diphosphate (IPP) and dimethylallyl diphosphate (DMAPP). Acts in the terminal step of the DOXP/MEP pathway for isoprenoid precursor biosynthesis. The chain is 4-hydroxy-3-methylbut-2-enyl diphosphate reductase from Mycobacterium sp. (strain KMS).